Here is a 530-residue protein sequence, read N- to C-terminus: uncharacterized protein (530 aa).

This sequence belongs to the mimivirus R640 family.

This is an uncharacterized protein from Acanthamoeba polyphaga (Amoeba).